Here is a 257-residue protein sequence, read N- to C-terminus: Phosphonates import ATP-binding protein PhnC (257 aa).

The ABC transporter domain occupies 2 to 246 (IEFRNVSKVY…KFAEIYGDVA (245 aa)). 35–42 (GLSGAGKS) provides a ligand contact to ATP.

Belongs to the ABC transporter superfamily. Phosphonates importer (TC 3.A.1.9.1) family. As to quaternary structure, the complex is composed of two ATP-binding proteins (PhnC), two transmembrane proteins (PhnE) and a solute-binding protein (PhnD).

Its subcellular location is the cell membrane. The enzyme catalyses phosphonate(out) + ATP + H2O = phosphonate(in) + ADP + phosphate + H(+). In terms of biological role, part of the ABC transporter complex PhnCDE involved in phosphonates import. Responsible for energy coupling to the transport system. The sequence is that of Phosphonates import ATP-binding protein PhnC from Bacillus cereus (strain ZK / E33L).